Here is a 490-residue protein sequence, read N- to C-terminus: ATP synthase subunit beta, plastid (490 aa).

ATP is bound at residue 170 to 177; that stretch reads GGAGVGKT.

The protein belongs to the ATPase alpha/beta chains family. In terms of assembly, F-type ATPases have 2 components, CF(1) - the catalytic core - and CF(0) - the membrane proton channel. CF(1) has five subunits: alpha(3), beta(3), gamma(1), delta(1), epsilon(1). CF(0) has four main subunits: a(1), b(1), b'(1) and c(9-12).

It is found in the plastid thylakoid membrane. It carries out the reaction ATP + H2O + 4 H(+)(in) = ADP + phosphate + 5 H(+)(out). Its function is as follows. Produces ATP from ADP in the presence of a proton gradient across the membrane. The catalytic sites are hosted primarily by the beta subunits. The chain is ATP synthase subunit beta, plastid from Cuscuta reflexa (Southern Asian dodder).